The following is a 213-amino-acid chain: MSNRKALLGKKLGMSQVWDENGFFVPVTLVDVSTNVVTAVKTEESDGYKAVQLGYGAIDPTKVTKPLAGHFAKAGVTPRRHLVEVRTDDVDQFEAGQELAADLFEEGAEVDVTGTTKGKGFAGTIKRWGFKSYRRTHGSHKNERRPGSVGACATPSRILKGKRMAGRMGHVTATTQNLIIVSADVENGILAIKGAIPGPKGGIVLVRSAVKGA.

This sequence belongs to the universal ribosomal protein uL3 family. Part of the 50S ribosomal subunit. Forms a cluster with proteins L14 and L19.

One of the primary rRNA binding proteins, it binds directly near the 3'-end of the 23S rRNA, where it nucleates assembly of the 50S subunit. This Bifidobacterium longum subsp. infantis (strain ATCC 15697 / DSM 20088 / JCM 1222 / NCTC 11817 / S12) protein is Large ribosomal subunit protein uL3.